A 471-amino-acid polypeptide reads, in one-letter code: Probable lysophospholipase BODYGUARD 2 (471 aa).

A signal peptide spans 1-45 (MGIARWLNRTVGFFVFALLDIADFLLCYTYKTLDYFLESERKPCY). C46 carries N-palmitoyl cysteine lipidation. In terms of domain architecture, AB hydrolase-1 spans 193-296 (VVFIHGFVSS…AIKSLTLLAP (104 aa)). The active site involves H197. S271 acts as the Nucleophile in catalysis. Active-site charge relay system residues include D418 and H446.

The protein localises to the cell membrane. It is found in the secreted. It localises to the cell wall. Functionally, involved in cuticle development and morphogenesis. The polypeptide is Probable lysophospholipase BODYGUARD 2 (Arabidopsis thaliana (Mouse-ear cress)).